Here is a 180-residue protein sequence, read N- to C-terminus: Adenine phosphoribosyltransferase (180 aa).

This sequence belongs to the purine/pyrimidine phosphoribosyltransferase family. As to quaternary structure, homodimer.

It is found in the cytoplasm. It carries out the reaction AMP + diphosphate = 5-phospho-alpha-D-ribose 1-diphosphate + adenine. Its pathway is purine metabolism; AMP biosynthesis via salvage pathway; AMP from adenine: step 1/1. Catalyzes a salvage reaction resulting in the formation of AMP, that is energically less costly than de novo synthesis. The sequence is that of Adenine phosphoribosyltransferase from Mannheimia succiniciproducens (strain KCTC 0769BP / MBEL55E).